The primary structure comprises 258 residues: Small ribosomal subunit protein uS2 (258 aa).

It belongs to the universal ribosomal protein uS2 family.

This chain is Small ribosomal subunit protein uS2, found in Granulibacter bethesdensis (strain ATCC BAA-1260 / CGDNIH1).